The following is a 1318-amino-acid chain: Tetratricopeptide repeat protein 41 (1318 aa).

6 TPR repeats span residues 401-434 (PRLEMDFLNEDSNVLVFSLLVEVFIAAISLKPCI), 653-686 (WIQEKPNGLLYFQHQSLRSAVEHKLLGVSTPVRE), 819-852 (GRIILFIGSFLKLMGKINEAEKLFLSAEDLLLQS), 860-893 (LRAQNAIGELYLEIGMTPKGLTYFQKAWSNLLRF), 993-1029 (MEFLADLLFFLLGENEKSQKKQAIEYYKQVIKIKEKA), and 1047-1084 (SDTLCKLAGQLLSGDFCHHATMEAVSYLYRSLDLRAAH). The disordered stretch occupies residues 1295-1318 (KPGFPRRSQIESKLLKTSDDPNKE). The span at 1302-1318 (SQIESKLLKTSDDPNKE) shows a compositional bias: basic and acidic residues.

In terms of tissue distribution, highly expressed in lung and myeloid leukemia cell line (at protein level). Isoform 4: expressed in heart (at protein level).

The protein localises to the cytoplasm. This is Tetratricopeptide repeat protein 41 from Mus musculus (Mouse).